We begin with the raw amino-acid sequence, 543 residues long: ATP synthase subunit alpha (543 aa).

Residue glycine 174 to threonine 181 coordinates ATP.

This sequence belongs to the ATPase alpha/beta chains family. F-type ATPases have 2 components, CF(1) - the catalytic core - and CF(0) - the membrane proton channel. CF(1) has five subunits: alpha(3), beta(3), gamma(1), delta(1), epsilon(1). CF(0) has three main subunits: a(1), b(2) and c(9-12). The alpha and beta chains form an alternating ring which encloses part of the gamma chain. CF(1) is attached to CF(0) by a central stalk formed by the gamma and epsilon chains, while a peripheral stalk is formed by the delta and b chains.

The protein localises to the cell membrane. It carries out the reaction ATP + H2O + 4 H(+)(in) = ADP + phosphate + 5 H(+)(out). Functionally, produces ATP from ADP in the presence of a proton gradient across the membrane. The alpha chain is a regulatory subunit. The chain is ATP synthase subunit alpha from Bifidobacterium longum subsp. infantis (strain ATCC 15697 / DSM 20088 / JCM 1222 / NCTC 11817 / S12).